The following is a 613-amino-acid chain: Phostensin (613 aa).

Residues R15 to L33 are compositionally biased toward basic and acidic residues. Disordered stretches follow at residues R15–Q231 and G266–R505. A phosphoserine mark is found at S54, S125, S133, S175, and S195. Composition is skewed to basic and acidic residues over residues R104–L154 and L167–K191. T199 is modified (phosphothreonine). A compositionally biased stretch (basic and acidic residues) spans T199–S221. Residue S224 is modified to Phosphoserine. Basic and acidic residues predominate over residues G266–W282. Over residues R301–G310 the composition is skewed to polar residues. Basic and acidic residues-rich tracts occupy residues A314–K327, K340–E350, and E357–E367. 2 positions are modified to phosphoserine: S368 and S432. Residues Q424–D446 show a composition bias toward pro residues. K457 is subject to N6-acetyllysine. The segment covering P476–P499 has biased composition (low complexity). Phosphoserine is present on residues S490 and S530. A disordered region spans residues Q552–P594. Positions P567–A578 are enriched in pro residues. Positions P580–L589 are enriched in acidic residues.

As to quaternary structure, interacts with Protein phosphatase 1 (PP1).

It is found in the cytoplasm. It localises to the cytoskeleton. Functionally, may target protein phosphatase 1 to F-actin cytoskeleton. In Macaca mulatta (Rhesus macaque), this protein is Phostensin (PPP1R18).